A 662-amino-acid chain; its full sequence is MRPQILLLLALLTLGLAAQRQDKVPCKMVDKKVSCQGLGLLQVPSVLPPDTETLDLSGNQLRSILASPLGFYTALRHLDLSTNEISFLQPGAFQALTHLEHLSLAHNRLAMATALSAGGLGPLPRVTSLDLSGNSLYSGLLERLLGEAPSLHTLSLAENSLTRLTRHTFRDMPVLEQLDLHSNVLMDIEDGAFEGLPRLTHLNLSRNSLTCISDFSLQQLRVLDLSCNSIEAFQTASQPQAEFQLTWLDLRENKLLHFPDLAALPRLIYLNLSNNLIRLPTGPPQDSKGIHAPSEGWSALPLSTPSWNASARPLSQLLNLDLSYNEIELIPDSFLEHLTSLCFLNLSRNCLRTFEARRSGSLPCLMLLDLSHNALETLELGARALGSLRTLLLQGNALRDLPPYTFANLASLQRLNLQGNRVSPCGGPDEPGPSGCVAFSGITSLHSLSLVDNEIELLRAGAFLHTPLTELDLSSNPGLEVATGALGGLEASLEVLALQGNGLTVLQVDLPCFICLKRLNLAENRLSHLPAWTQAVSLEVLDLRNNSFSLLPGSAMGGLETSLRRLYLQGNPLSCCGNGWLAAQLHQGRVDVDATQDLICRFSSQEEVSLSHVRPEDCEKGGLKNINLIIILTFILVSAILLTTLATCCCVRRQKFNQQYKA.

Residues 1–17 form the signal peptide; it reads MRPQILLLLALLTLGLA. Residues 18-625 lie on the Extracellular side of the membrane; sequence AQRQDKVPCK…EDCEKGGLKN (608 aa). The LRRNT domain occupies 21–48; it reads QDKVPCKMVDKKVSCQGLGLLQVPSVLP. LRR repeat units lie at residues 50-73, 74-95, 98-119, 125-145, 150-171, 174-195, 198-219, 220-240, 244-265, and 266-286; these read DTET…GFYT, ALRH…AFQA, HLEH…SAGG, RVTS…ERLL, SLHT…TFRD, VLEQ…AFEG, RLTH…SLQQ, LRVL…SQPQ, QLTW…AALP, and RLIY…PPQD. Asn203 carries an N-linked (GlcNAc...) asparagine glycan. Residues Asn271 and Asn308 are each glycosylated (N-linked (GlcNAc...) asparagine). LRR repeat units lie at residues 316-339, 340-361, 364-385, 387-408, 411-432, 444-465, 467-488, 492-513, 515-536, and 537-558; these read QLLN…EHLT, SLCF…RSGS, CLML…ARAL, SLRT…TFAN, SLQR…DEPG, SLHS…AFLH, PLTE…ALGG, SLEV…LPCF, CLKR…TQAV, and SLEV…AMGG. Asn345 carries an N-linked (GlcNAc...) asparagine glycan. Asn545 is a glycosylation site (N-linked (GlcNAc...) asparagine). The LRRCT domain occupies 571–620; sequence NPLSCCGNGWLAAQLHQGRVDVDATQDLICRFSSQEEVSLSHVRPEDCEK. The chain crosses the membrane as a helical span at residues 626–646; that stretch reads INLIIILTFILVSAILLTTLA. The Cytoplasmic portion of the chain corresponds to 647–662; it reads TCCCVRRQKFNQQYKA.

It belongs to the LRRC32/LRRC33 family. As to quaternary structure, interacts with TGFB1; associates via disulfide bonds with the Latency-associated peptide chain (LAP) regulatory chain of TGFB1, leading to regulate activation of TGF-beta-1. Interacts with TGFB2. Interacts with TGFB3; associates via disulfide bonds with the Latency-associated peptide chain (LAP) regulatory chain of TGFB3, leading to regulate activation of TGF-beta-3. Interacts with LAPTM4B; decreases TGFB1 production in regulatory T-cells.

The protein resides in the cell membrane. Its subcellular location is the cell surface. In terms of biological role, key regulator of transforming growth factor beta (TGFB1, TGFB2 and TGFB3) that controls TGF-beta activation by maintaining it in a latent state during storage in extracellular space. Associates specifically via disulfide bonds with the Latency-associated peptide (LAP), which is the regulatory chain of TGF-beta, and regulates integrin-dependent activation of TGF-beta. Able to outcompete LTBP1 for binding to LAP regulatory chain of TGF-beta. Controls activation of TGF-beta-1 (TGFB1) on the surface of activated regulatory T-cells (Tregs). Required for epithelial fusion during palate development by regulating activation of TGF-beta-3 (TGFB3). This chain is Transforming growth factor beta activator LRRC32, found in Pongo abelii (Sumatran orangutan).